A 412-amino-acid polypeptide reads, in one-letter code: Vacuolar calcium ion transporter (412 aa).

Topologically, residues 1–55 (MIERLKIAKNRLEAMNSFNFPAQDRHERAPLLGSEYDHSMARQLSLLNVVGMTKS) are cytoplasmic. A helical transmembrane segment spans residues 56–76 (VLMSSYFNLMLVFVPIGLIAG). Over 77 to 83 (WFEWNAK) the chain is Lumenal. Residues 84-104 (SVFILNMLAIIPLASLLSFAT) traverse the membrane as a helical segment. The Cytoplasmic segment spans residues 105–114 (EQLSIISGPT). Residues 115–135 (LGALLNASFGNAIELIVGVLA) form a helical membrane-spanning segment. The Lumenal portion of the chain corresponds to 136-148 (LKRGELRIVQSSL). A helical membrane pass occupies residues 149–169 (LGSILSNLLLVFGMCLVTTGI). The Cytoplasmic portion of the chain corresponds to 170 to 177 (RREITTFN). A helical transmembrane segment spans residues 178–198 (ITVAQTMIAMLALSTATILIP). At 199–215 (ATFHYSLPDNANSENAL) the chain is on the lumenal side. A helical membrane pass occupies residues 216–236 (LHVSRGTAVIVLIVYVLLLVF). Residues 237 to 264 (QLKTHKHVCHDPSEVEEETEPRILGLRS) lie on the Cytoplasmic side of the membrane. Residues 265–285 (SIAMLAIVTVFVSLCADYLVG) form a helical membrane-spanning segment. The Lumenal segment spans residues 286–299 (SIDQLVEEVNISKT). A helical transmembrane segment spans residues 300–320 (FVGLVILPVVGNAAEHVTAIV). Topologically, residues 321–334 (VSYRGQMDLALGVA) are cytoplasmic. Residues 335–355 (IGSSIQIALFLAPFLVIVGWI) form a helical membrane-spanning segment. Residues 356–358 (ISQ) are Lumenal-facing. The chain crosses the membrane as a helical span at residues 359–379 (PLTLYFESLETVILFVSVFLV). Residues 380 to 389 (NYLIQDGATH) are Cytoplasmic-facing. Residues 390–410 (WLEGVQLLALYAIVVLAFFYY) traverse the membrane as a helical segment. Residues 411-412 (PQ) lie on the Lumenal side of the membrane.

This sequence belongs to the Ca(2+):cation antiporter (CaCA) (TC 2.A.19) family.

Its subcellular location is the vacuole membrane. It is found in the endoplasmic reticulum membrane. Has a role in promoting intracellular calcium ion sequestration via the exchange of calcium ions for hydrogen ions across the vacuolar membrane. Involved also in manganese ion homeostasis via its uptake into the vacuole. The polypeptide is Vacuolar calcium ion transporter (vcx1) (Schizosaccharomyces pombe (strain 972 / ATCC 24843) (Fission yeast)).